We begin with the raw amino-acid sequence, 287 residues long: Homoserine kinase (287 aa).

79–89 is a binding site for ATP; it reads PLARGLGSSSS.

Belongs to the GHMP kinase family. Homoserine kinase subfamily.

It is found in the cytoplasm. It catalyses the reaction L-homoserine + ATP = O-phospho-L-homoserine + ADP + H(+). The protein operates within amino-acid biosynthesis; L-threonine biosynthesis; L-threonine from L-aspartate: step 4/5. Catalyzes the ATP-dependent phosphorylation of L-homoserine to L-homoserine phosphate. This is Homoserine kinase from Enterococcus faecalis (strain ATCC 700802 / V583).